Consider the following 226-residue polypeptide: Cytidylate kinase (226 aa).

Position 10–18 (Gly10–Thr18) interacts with ATP.

It is found in the cytoplasm. It catalyses the reaction CMP + ATP = CDP + ADP. The catalysed reaction is dCMP + ATP = dCDP + ADP. The protein is Cytidylate kinase of Streptococcus pyogenes serotype M6 (strain ATCC BAA-946 / MGAS10394).